The chain runs to 615 residues: DNA mismatch repair protein MutL (615 aa).

Residues 369–397 (REPVAPRYTPAPASGSRPAAPWPNAQPGY) are disordered. Residues 378 to 391 (PAPASGSRPAAPWP) show a composition bias toward low complexity.

The protein belongs to the DNA mismatch repair MutL/HexB family.

This protein is involved in the repair of mismatches in DNA. It is required for dam-dependent methyl-directed DNA mismatch repair. May act as a 'molecular matchmaker', a protein that promotes the formation of a stable complex between two or more DNA-binding proteins in an ATP-dependent manner without itself being part of a final effector complex. The sequence is that of DNA mismatch repair protein MutL from Escherichia coli (strain SMS-3-5 / SECEC).